A 543-amino-acid chain; its full sequence is CTP synthase (543 aa).

Residues 1–265 (MTRYIFVTGG…DDFVVERFGL (265 aa)) are amidoligase domain. Position 13 (S13) interacts with CTP. S13 is a binding site for UTP. Residues 14–19 (SLGKGI) and D71 each bind ATP. Residues D71 and E139 each coordinate Mg(2+). CTP-binding positions include 146-148 (DIE), 186-191 (KTKPTQ), and K222. UTP contacts are provided by residues 186–191 (KTKPTQ) and K222. The Glutamine amidotransferase type-1 domain occupies 290–541 (TIAMVGKYME…VKAALAQHQK (252 aa)). G351 serves as a coordination point for L-glutamine. C378 functions as the Nucleophile; for glutamine hydrolysis in the catalytic mechanism. Residues 379–382 (LGMQ), E402, and R469 contribute to the L-glutamine site. Catalysis depends on residues H514 and E516.

Belongs to the CTP synthase family. In terms of assembly, homotetramer.

It carries out the reaction UTP + L-glutamine + ATP + H2O = CTP + L-glutamate + ADP + phosphate + 2 H(+). The enzyme catalyses L-glutamine + H2O = L-glutamate + NH4(+). It catalyses the reaction UTP + NH4(+) + ATP = CTP + ADP + phosphate + 2 H(+). It participates in pyrimidine metabolism; CTP biosynthesis via de novo pathway; CTP from UDP: step 2/2. With respect to regulation, allosterically activated by GTP, when glutamine is the substrate; GTP has no effect on the reaction when ammonia is the substrate. The allosteric effector GTP functions by stabilizing the protein conformation that binds the tetrahedral intermediate(s) formed during glutamine hydrolysis. Inhibited by the product CTP, via allosteric rather than competitive inhibition. Catalyzes the ATP-dependent amination of UTP to CTP with either L-glutamine or ammonia as the source of nitrogen. Regulates intracellular CTP levels through interactions with the four ribonucleotide triphosphates. This chain is CTP synthase, found in Pseudomonas syringae pv. tomato (strain ATCC BAA-871 / DC3000).